The sequence spans 160 residues: Probable chemoreceptor glutamine deamidase CheD 2 (160 aa).

The protein belongs to the CheD family.

The enzyme catalyses L-glutaminyl-[protein] + H2O = L-glutamyl-[protein] + NH4(+). Functionally, probably deamidates glutamine residues to glutamate on methyl-accepting chemotaxis receptors (MCPs), playing an important role in chemotaxis. The polypeptide is Probable chemoreceptor glutamine deamidase CheD 2 (Geobacter sulfurreducens (strain ATCC 51573 / DSM 12127 / PCA)).